A 385-amino-acid chain; its full sequence is UPF0744 protein YSD83 (385 aa).

Belongs to the UPF0744 family.

The chain is UPF0744 protein YSD83 (YSD83) from Saccharomyces paradoxus (Yeast).